Consider the following 460-residue polypeptide: Argininosuccinate lyase (460 aa).

This sequence belongs to the lyase 1 family. Argininosuccinate lyase subfamily.

The protein localises to the cytoplasm. It catalyses the reaction 2-(N(omega)-L-arginino)succinate = fumarate + L-arginine. It functions in the pathway amino-acid biosynthesis; L-arginine biosynthesis; L-arginine from L-ornithine and carbamoyl phosphate: step 3/3. The polypeptide is Argininosuccinate lyase (Limosilactobacillus fermentum (strain NBRC 3956 / LMG 18251) (Lactobacillus fermentum)).